The chain runs to 340 residues: Ferrochelatase (340 aa).

Fe cation contacts are provided by His189 and Glu292.

It belongs to the ferrochelatase family.

It is found in the cytoplasm. It carries out the reaction heme b + 2 H(+) = protoporphyrin IX + Fe(2+). The protein operates within porphyrin-containing compound metabolism; protoheme biosynthesis; protoheme from protoporphyrin-IX: step 1/1. In terms of biological role, catalyzes the ferrous insertion into protoporphyrin IX. The polypeptide is Ferrochelatase (Pseudomonas aeruginosa (strain UCBPP-PA14)).